The following is a 341-amino-acid chain: Putative methyltransferase YGR283C (341 aa).

Belongs to the class IV-like SAM-binding methyltransferase superfamily.

It localises to the nucleus. The protein localises to the nucleolus. This chain is Putative methyltransferase YGR283C, found in Saccharomyces cerevisiae (strain ATCC 204508 / S288c) (Baker's yeast).